A 703-amino-acid chain; its full sequence is NADH-quinone oxidoreductase chain 12 (703 aa).

Helical transmembrane passes span 4-24 (FVLFAPLIASLIAGLGWRAIG), 30-50 (YLTTGVLFLSCLISWYLFLSF), 79-99 (LTAIMLIVVTTVSALVHMYSL), 116-136 (ARFFAYLSFFTFAMLMLVTAD), 138-158 (LLQMFFGWEGVGVASYLLIGF), 179-199 (GDFGFLLGIFGIYWLTGSVQF), 224-244 (ANLLGFLLFVGAMGKSAQLLL), 256-276 (TPVSALIHAATMVTAGVFLVC), 290-310 (NFIVIIGATTAFFAATVGLVQ), 325-345 (LGYMFVAAGVGVYSAAMFHLL), 346-366 (THAFFKAMLFLGAGSVIHAMH), 381-401 (IPLTFWAMMIGTFAITGVGIP), 415-435 (AIIESAYAGSGYAFWLLVIAA), 475-495 (LGVLAIGAVFAGMVWYGPFFG), 580-600 (VSPFVAMVLGLITAWTFYIAN), and 679-699 (LFHYAFAMVLGIVGLLIWVMM).

The protein belongs to the complex I subunit 5 family. NDH-1 is composed of at least 14 different subunits, Nqo1 to Nqo14. The complex has a L-shaped structure, with the hydrophobic arm (subunits Nqo7, Nqo8, Nqo10 to Nqo14) embedded in the inner membrane and the hydrophilic peripheral arm (subunits Nqo1 to Nqo6, Nqo9) protruding into the bacterial cytoplasm. The hydrophilic domain contains all the redox centers.

The protein localises to the cell inner membrane. The enzyme catalyses a quinone + NADH + 5 H(+)(in) = a quinol + NAD(+) + 4 H(+)(out). In terms of biological role, NDH-1 shuttles electrons from NADH, via FMN and iron-sulfur (Fe-S) centers, to quinones in the respiratory chain. The immediate electron acceptor for the enzyme in this species is believed to be ubiquinone. Couples the redox reaction to proton translocation (for every two electrons transferred, four hydrogen ions are translocated across the cytoplasmic membrane), and thus conserves the redox energy in a proton gradient. The chain is NADH-quinone oxidoreductase chain 12 from Paracoccus denitrificans.